A 241-amino-acid polypeptide reads, in one-letter code: Major prion protein (241 aa).

A signal peptide spans 1–15; sequence MLVLFVATWSDLGLC. Residues 16 to 31 form an interaction with ADGRG6 region; sequence KKRPKPGGWNTGGSRY. Residues 16-223 form an interaction with GRB2, ERI3 and SYN1 region; it reads KKRPKPGGWN…ESQAYYQRGS (208 aa). A disordered region spans residues 18-101; sequence RPKPGGWNTG…WHKPNKPKTS (84 aa). Repeat copies occupy residues 44–52, 53–60, 61–68, 69–76, and 77–84. Residues 44–84 are 5 X 8 AA tandem repeats of P-H-G-G-G-W-G-Q; the sequence is PQGGGGWGQPHGGGWGQPHGGGWGQPHGGGWGQPHGGGWGQ. Positions 45-88 are enriched in gly residues; sequence QGGGGWGQPHGGGWGQPHGGGWGQPHGGGWGQPHGGGWGQGGGT. Positions 54, 55, 56, 62, 63, 64, 70, 71, 72, 78, 79, and 80 each coordinate Cu(2+). Over residues 91–101 the composition is skewed to basic residues; sequence QWHKPNKPKTS. The cysteines at positions 172 and 207 are disulfide-linked. 2 N-linked (GlcNAc...) asparagine glycosylation sites follow: Asn-174 and Asn-190. Ser-223 is lipidated: GPI-anchor amidated serine. Positions 224–241 are cleaved as a propeptide — removed in mature form; sequence SMVLFSSPPVILLISFLI.

Belongs to the prion family. In terms of assembly, monomer and homodimer. Has a tendency to aggregate into amyloid fibrils containing a cross-beta spine, formed by a steric zipper of superposed beta-strands. Soluble oligomers may represent an intermediate stage on the path to fibril formation. Copper binding may promote oligomerization. Interacts with GRB2, APP, ERI3/PRNPIP and SYN1. Mislocalized cytosolically exposed PrP interacts with MGRN1; this interaction alters MGRN1 subcellular location and causes lysosomal enlargement. Interacts with APP. Interacts with KIAA1191. Interacts with ADGRG6.

The protein resides in the cell membrane. It is found in the golgi apparatus. Functionally, its primary physiological function is unclear. May play a role in neuronal development and synaptic plasticity. May be required for neuronal myelin sheath maintenance. May promote myelin homeostasis through acting as an agonist for ADGRG6 receptor. May play a role in iron uptake and iron homeostasis. Soluble oligomers are toxic to cultured neuroblastoma cells and induce apoptosis (in vitro). Association with GPC1 (via its heparan sulfate chains) targets PRNP to lipid rafts. Also provides Cu(2+) or Zn(2+) for the ascorbate-mediated GPC1 deaminase degradation of its heparan sulfate side chains. In Mandrillus sphinx (Mandrill), this protein is Major prion protein (PRNP).